The sequence spans 615 residues: Zinc metalloproteinase R519 (615 aa).

The 611-residue stretch at 1–611 (MTYRSCIPQN…LDPQLRSRIL (611 aa)) folds into the Peptidase M13 domain. His-454 is a Zn(2+) binding site. The active site involves Glu-455. Residues His-458 and Glu-513 each coordinate Zn(2+). The Proton donor role is filled by Asp-517.

It belongs to the peptidase M13 family. Zn(2+) is required as a cofactor.

In terms of biological role, zinc metalloprotease. This is Zinc metalloproteinase R519 from Acanthamoeba polyphaga (Amoeba).